The chain runs to 1152 residues: Nardilysin (1152 aa).

Positions 1–20 are cleaved as a signal peptide; the sequence is MLRKVTVAAVCATRRKLCEA. Disordered stretches follow at residues 81-108 and 133-208; these read LGAD…KSPS and MEGK…KKTT. Phosphoserine occurs at positions 86, 94, and 96. Positions 141 to 198 are enriched in acidic residues; it reads TDDEEEEEVEEEEEDDDEDSGAEIEDDDEEGFDDEDEFDDEHDDDLDTEDNELEELEE. A Zn(2+)-binding site is contributed by H234. E237 (proton acceptor) is an active-site residue. The Zn(2+) site is built by H238 and E315.

The protein belongs to the peptidase M16 family. Interacts with BACE1 and NRG1. Zn(2+) serves as cofactor.

The protein localises to the mitochondrion. It localises to the cell projection. It is found in the dendrite. The catalysed reaction is Hydrolysis of polypeptides, preferably at -Xaa-|-Arg-Lys-, and less commonly at -Arg-|-Arg-Xaa-, in which Xaa is not Arg or Lys.. In terms of biological role, cleaves peptide substrates on the N-terminus of arginine residues in dibasic pairs. Is a critical activator of BACE1- and ADAM17-mediated pro-neuregulin ectodomain shedding, involved in the positive regulation of axonal maturation and myelination. Required for proper functioning of 2-oxoglutarate dehydrogenase (OGDH). The chain is Nardilysin from Pongo abelii (Sumatran orangutan).